We begin with the raw amino-acid sequence, 344 residues long: Arginine N-succinyltransferase (344 aa).

A succinyl-CoA-binding site is contributed by Leu-125. His-229 serves as the catalytic Proton donor.

The protein belongs to the arginine N-succinyltransferase family.

It carries out the reaction succinyl-CoA + L-arginine = N(2)-succinyl-L-arginine + CoA + H(+). The protein operates within amino-acid degradation; L-arginine degradation via AST pathway; L-glutamate and succinate from L-arginine: step 1/5. Its function is as follows. Catalyzes the transfer of succinyl-CoA to arginine to produce N(2)-succinylarginine. The protein is Arginine N-succinyltransferase of Shigella flexneri serotype 5b (strain 8401).